The chain runs to 284 residues: MTDVPATFTQAECNGDKPPENGQQTITKISEELTDVDSPLPHYRVEPSLEGALTKGSQEERRKLQGNMLLNSSMEDKMLKENPEEKLFIVHKAITDLSLQETSADEMTFREGHQWEKIPLSGSNQEIRRQKERITEQPLKEEEDEDRKNKGHQAAEIEWLGFRKPSQADMLHSKHDEEQKVWDEEIDDDDDDNCNNDEDEVRVIEFKKKHEEVSQFKEEGDASEDSPLSSASSQAVTPDEQPTLGKKSDISRNAYSRYNTISYRKIRKGNTKQRIDEFESMMHL.

Residues 1–23 (MTDVPATFTQAECNGDKPPENGQ) are disordered. Phosphoserine is present on Ser73. Residues 110–251 (REGHQWEKIP…PTLGKKSDIS (142 aa)) are disordered. 2 stretches are compositionally biased toward basic and acidic residues: residues 126–140 (EIRR…QPLK) and 171–183 (LHSK…KVWD). A compositionally biased stretch (acidic residues) spans 184 to 200 (EEIDDDDDDNCNNDEDE). The span at 201-220 (VRVIEFKKKHEEVSQFKEEG) shows a compositional bias: basic and acidic residues. Residues Ser214, Ser226, Ser230, and Ser233 each carry the phosphoserine modification. Low complexity predominate over residues 225-235 (DSPLSSASSQA). Thr237 carries the post-translational modification Phosphothreonine. The segment at 265-284 (KIRKGNTKQRIDEFESMMHL) is binds actin.

As to quaternary structure, binds actin. In terms of tissue distribution, highly expressed in adult and fetal brain. Expressed at intermediate levels in the lung and liver.

Its subcellular location is the cytoplasm. It is found in the cytoskeleton. Plays a role in cytoskeletal rearrangements during the late wrapping and/or compaction phases of myelinogenesis as well as in maintenance and stability of myelin sheath in the adult. May play an important role in late-stage oligodendroglia maturation, myelin/Ranvier node formation during CNS development, and in the maintenance and plasticity of related structures in the mature CNS. The protein is Ermin (ERMN) of Homo sapiens (Human).